We begin with the raw amino-acid sequence, 470 residues long: Methylenetetrahydrofolate--tRNA-(uracil-5-)-methyltransferase TrmFO (470 aa).

10 to 15 (GAGLAG) is an FAD binding site.

It belongs to the MnmG family. TrmFO subfamily. It depends on FAD as a cofactor.

It is found in the cytoplasm. The catalysed reaction is uridine(54) in tRNA + (6R)-5,10-methylene-5,6,7,8-tetrahydrofolate + NADH + H(+) = 5-methyluridine(54) in tRNA + (6S)-5,6,7,8-tetrahydrofolate + NAD(+). The enzyme catalyses uridine(54) in tRNA + (6R)-5,10-methylene-5,6,7,8-tetrahydrofolate + NADPH + H(+) = 5-methyluridine(54) in tRNA + (6S)-5,6,7,8-tetrahydrofolate + NADP(+). Its function is as follows. Catalyzes the folate-dependent formation of 5-methyl-uridine at position 54 (M-5-U54) in all tRNAs. The polypeptide is Methylenetetrahydrofolate--tRNA-(uracil-5-)-methyltransferase TrmFO (Prochlorococcus marinus (strain MIT 9215)).